Reading from the N-terminus, the 387-residue chain is Putative transmembrane protein At3g54730 (387 aa).

Pro residues predominate over residues 10 to 25 (PAPPLLLPSPNPPPCA). The segment at 10-45 (PAPPLLLPSPNPPPCALPQDLTSLVSPSEPPDPPDP) is disordered. 8 consecutive transmembrane segments (helical) span residues 97-117 (VFPL…HPLV), 128-148 (GSNF…ILQF), 154-174 (VMIS…MILL), 186-206 (VLFS…VGLI), 221-241 (IQKL…FLEI), 292-312 (SWCF…YPLE), 335-355 (FSTI…FIFF), and 362-382 (PFVA…LNHF).

The protein resides in the membrane. The sequence is that of Putative transmembrane protein At3g54730 from Arabidopsis thaliana (Mouse-ear cress).